The following is a 625-amino-acid chain: Coagulation factor XI (625 aa).

Residues 1-18 form the signal peptide; that stretch reads MIFLYQVVHFILFTSVSG. 4 consecutive Apple domains span residues 20–103, 110–193, 200–283, and 291–374; these read CVTQ…FKQC, CNKD…LKSC, CIRD…LQSC, and CHSS…LRLC. Intrachain disulfides connect cysteine 20/cysteine 103, cysteine 46/cysteine 76, cysteine 50/cysteine 56, cysteine 110/cysteine 193, cysteine 136/cysteine 165, cysteine 140/cysteine 146, cysteine 200/cysteine 283, cysteine 226/cysteine 255, cysteine 230/cysteine 236, cysteine 291/cysteine 374, cysteine 317/cysteine 346, cysteine 321/cysteine 327, cysteine 380/cysteine 500, cysteine 416/cysteine 432, cysteine 514/cysteine 581, cysteine 545/cysteine 560, and cysteine 571/cysteine 599. N-linked (GlcNAc...) (complex) asparagine glycans are attached at residues asparagine 90 and asparagine 126. Asparagine 163 carries an N-linked (GlcNAc...) (complex) asparagine; atypical glycan. The region spanning 388 to 623 is the Peptidase S1 domain; it reads IVGGTASVRG…YVDWILEKTQ (236 aa). Histidine 431 serves as the catalytic Charge relay system. N-linked (GlcNAc...) (complex) asparagine glycosylation is present at asparagine 450. Catalysis depends on aspartate 480, which acts as the Charge relay system. A glycan (N-linked (GlcNAc...) (complex) asparagine) is linked at asparagine 491. 547–550 contributes to the heparin binding site; that stretch reads KRYR. Serine 575 (charge relay system) is an active-site residue.

Belongs to the peptidase S1 family. Plasma kallikrein subfamily. Homodimer; disulfide-linked. Can form non-covalently bonded homodimers. After activation the heavy and light chains are also linked by a disulfide bond. Interacts (activated) with F9 (inactive and activated) in calcium-dependent manner. Forms a heterodimer with SERPINA5. Interacts with Anopheles gambiae D7L2. Interacts (activated) with guianensin, an anticoagulant protein from Simulium guianense saliva. In terms of processing, N-glycosylated on both chains. N-glycosylated sites mainly consist of nonfucosylated sialylated biantennary (in high abundance) and/or triantennary (in low abundance) complex structures. Glycosylation at Asn-163 uses a rare non-canonical Asn-X-Cys glycosite. Post-translationally, activated by factor XIIa (or XII), which cleaves each polypeptide after Arg-387 into the light chain, which contains the active site, and the heavy chain, which associates with high molecular weight (HMW) kininogen. Activated by F12 (activated); the presence of negatively charged surfaces accelerates activation. Activated by F2 (thrombin); the presence of negatively charged surfaces, such as polyphosphate and dextran sulfate, strongly accelerates activation. Autoactivated; the presence of negatively charged surfaces, such as polyphosphate and dextran sulfate, accelerates autoactivation and autolysis. As to expression, isoform 2 is produced by platelets and megakaryocytes but absent from other blood cells.

The protein resides in the secreted. The catalysed reaction is Selective cleavage of Arg-|-Ala and Arg-|-Val bonds in factor IX to form factor IXa.. Inhibited by SERPINA5. In terms of biological role, factor XI triggers the middle phase of the intrinsic pathway of blood coagulation by activating factor IX. This chain is Coagulation factor XI (F11), found in Homo sapiens (Human).